A 256-amino-acid polypeptide reads, in one-letter code: uncharacterized protein (256 aa).

The N-terminal stretch at 1–22 is a signal peptide; it reads MGYLKRIGMCISLLIVIIFVTS. C23 is lipidated: N-palmitoyl cysteine. C23 carries the S-diacylglycerol cysteine lipid modification.

It belongs to the staphylococcal tandem lipoprotein family.

Its subcellular location is the cell membrane. This is an uncharacterized protein from Staphylococcus aureus (strain MRSA252).